Reading from the N-terminus, the 191-residue chain is MSIQNSLPDYQSFDETLHQQSVALTAAEMHGLISGLLCGGNRDSSWQVLVHDLANDGLAFSHPLAQKLRELREITFESLDDSNFAFGLLLPDEEDNVFERADALAGWVNHFLLGLGVAQPKFADRKEISEIIGDLRNIGLLGYEEGDDQEELSQALEEVLEYVQVAAQLCYIAFTEPKTVLIAKNDKPTLH.

This sequence belongs to the UPF0149 family.

In Photorhabdus laumondii subsp. laumondii (strain DSM 15139 / CIP 105565 / TT01) (Photorhabdus luminescens subsp. laumondii), this protein is UPF0149 protein plu3602.